We begin with the raw amino-acid sequence, 256 residues long: Pimeloyl-[acyl-carrier protein] methyl ester esterase (256 aa).

The 225-residue stretch at 17–241 (VYLIHGWGAN…KAAHAPFLSH (225 aa)) folds into the AB hydrolase-1 domain. Substrate contacts are provided by residues W23, 83–84 (SL), and 145–149 (FLQLQ). The active-site Nucleophile is the S83. Active-site residues include D207 and H235. H235 serves as a coordination point for substrate.

This sequence belongs to the AB hydrolase superfamily. Carboxylesterase BioH family. In terms of assembly, monomer.

Its subcellular location is the cytoplasm. It catalyses the reaction 6-carboxyhexanoyl-[ACP] methyl ester + H2O = 6-carboxyhexanoyl-[ACP] + methanol + H(+). Its pathway is cofactor biosynthesis; biotin biosynthesis. Functionally, the physiological role of BioH is to remove the methyl group introduced by BioC when the pimeloyl moiety is complete. It allows to synthesize pimeloyl-ACP via the fatty acid synthetic pathway through the hydrolysis of the ester bonds of pimeloyl-ACP esters. The polypeptide is Pimeloyl-[acyl-carrier protein] methyl ester esterase (Neisseria meningitidis serogroup C / serotype 2a (strain ATCC 700532 / DSM 15464 / FAM18)).